We begin with the raw amino-acid sequence, 1484 residues long: Chromosome partition protein MukB (1484 aa).

34–41 (GGNGAGKS) is a binding site for ATP. Coiled coils occupy residues 338-415 (NLVQ…RAIQ), 496-604 (QTAR…ALAW), 781-805 (AARE…ATLS), 835-868 (EAEM…HYDQ), 903-1115 (HDAQ…SAKA), and 1206-1265 (DDPV…LQAV). A flexible hinge region spans residues 666 to 783 (PGGTDDARLT…AVPLFGRAAR (118 aa)).

Belongs to the SMC family. MukB subfamily. As to quaternary structure, homodimerization via its hinge domain. Binds to DNA via its C-terminal region. Interacts, and probably forms a ternary complex, with MukE and MukF via its C-terminal region. The complex formation is stimulated by calcium or magnesium. Interacts with tubulin-related protein FtsZ.

The protein resides in the cytoplasm. It is found in the nucleoid. Its function is as follows. Plays a central role in chromosome condensation, segregation and cell cycle progression. Functions as a homodimer, which is essential for chromosome partition. Involved in negative DNA supercoiling in vivo, and by this means organize and compact chromosomes. May achieve or facilitate chromosome segregation by condensation DNA from both sides of a centrally located replisome during cell division. The polypeptide is Chromosome partition protein MukB (Sodalis glossinidius (strain morsitans)).